We begin with the raw amino-acid sequence, 194 residues long: ECF RNA polymerase sigma factor SigX (194 aa).

Residues 32-45 carry the Polymerase core binding motif; that stretch reads DLLQEVYIRVLNSY. Positions 136–155 form a DNA-binding region, H-T-H motif; it reads IQETAKALRFSESKVKTTQH.

The protein belongs to the sigma-70 factor family. ECF subfamily. As to quaternary structure, interacts transiently with the RNAP core.

It is found in the cell membrane. Its function is as follows. Sigma factors are initiation factors that promote the attachment of RNA polymerase (RNAP) to specific initiation sites and are then released. May be involved in the regulation of iron metabolism. Associates with RNAP core during early growth phases, association decreases as cells age. This is ECF RNA polymerase sigma factor SigX (sigX) from Bacillus subtilis (strain 168).